The following is a 334-amino-acid chain: Fructose-1,6-bisphosphatase class 1 (334 aa).

Mg(2+) is bound by residues glutamate 90, aspartate 113, leucine 115, and aspartate 116. Substrate is bound by residues 116-119 (DGSS), asparagine 209, tyrosine 242, and lysine 272. Mg(2+) is bound at residue glutamate 278.

It belongs to the FBPase class 1 family. As to quaternary structure, homotetramer. It depends on Mg(2+) as a cofactor.

Its subcellular location is the cytoplasm. It carries out the reaction beta-D-fructose 1,6-bisphosphate + H2O = beta-D-fructose 6-phosphate + phosphate. It participates in carbohydrate biosynthesis; gluconeogenesis. The sequence is that of Fructose-1,6-bisphosphatase class 1 from Actinobacillus pleuropneumoniae serotype 5b (strain L20).